The following is a 373-amino-acid chain: Chaperone protein DnaJ (373 aa).

The 66-residue stretch at 5-70 (DYYEVLGVHR…QQRVIYDQYG (66 aa)) folds into the J domain. The CR-type zinc finger occupies 136-214 (GLETKIQIPR…CHGSGRVRGK (79 aa)). The Zn(2+) site is built by cysteine 149, cysteine 152, cysteine 166, cysteine 169, cysteine 188, cysteine 191, cysteine 202, and cysteine 205. CXXCXGXG motif repeat units follow at residues 149-156 (CGTCDGIG), 166-173 (CPTCQGAG), 188-195 (CPECNGEG), and 202-209 (CEECHGSG).

Belongs to the DnaJ family. As to quaternary structure, homodimer. Zn(2+) is required as a cofactor.

The protein localises to the cytoplasm. Its function is as follows. Participates actively in the response to hyperosmotic and heat shock by preventing the aggregation of stress-denatured proteins and by disaggregating proteins, also in an autonomous, DnaK-independent fashion. Unfolded proteins bind initially to DnaJ; upon interaction with the DnaJ-bound protein, DnaK hydrolyzes its bound ATP, resulting in the formation of a stable complex. GrpE releases ADP from DnaK; ATP binding to DnaK triggers the release of the substrate protein, thus completing the reaction cycle. Several rounds of ATP-dependent interactions between DnaJ, DnaK and GrpE are required for fully efficient folding. Also involved, together with DnaK and GrpE, in the DNA replication of plasmids through activation of initiation proteins. This Syntrophotalea carbinolica (strain DSM 2380 / NBRC 103641 / GraBd1) (Pelobacter carbinolicus) protein is Chaperone protein DnaJ.